Here is an 853-residue protein sequence, read N- to C-terminus: DNA mismatch repair protein MutS (853 aa).

614 to 621 (GPNMGGKS) serves as a coordination point for ATP.

Belongs to the DNA mismatch repair MutS family.

Functionally, this protein is involved in the repair of mismatches in DNA. It is possible that it carries out the mismatch recognition step. This protein has a weak ATPase activity. The protein is DNA mismatch repair protein MutS of Shigella boydii serotype 18 (strain CDC 3083-94 / BS512).